The chain runs to 181 residues: Large ribosomal subunit protein uL5 (181 aa).

It belongs to the universal ribosomal protein uL5 family. In terms of assembly, part of the 50S ribosomal subunit; contacts the 5S rRNA and probably tRNA. Forms a bridge to the 30S subunit in the 70S ribosome.

This is one of the proteins that bind and probably mediate the attachment of the 5S RNA into the large ribosomal subunit, where it forms part of the central protuberance. In the 70S ribosome it contacts protein S13 of the 30S subunit (bridge B1b), connecting the 2 subunits; this bridge is implicated in subunit movement. May contact the P site tRNA; the 5S rRNA and some of its associated proteins might help stabilize positioning of ribosome-bound tRNAs. The protein is Large ribosomal subunit protein uL5 of Methanococcus maripaludis (strain C6 / ATCC BAA-1332).